Here is a 496-residue protein sequence, read N- to C-terminus: L-arabinose isomerase (496 aa).

Mn(2+)-binding residues include glutamate 302, glutamate 329, histidine 346, and histidine 445.

This sequence belongs to the arabinose isomerase family. Mn(2+) is required as a cofactor.

The enzyme catalyses beta-L-arabinopyranose = L-ribulose. It participates in carbohydrate degradation; L-arabinose degradation via L-ribulose; D-xylulose 5-phosphate from L-arabinose (bacterial route): step 1/3. Functionally, catalyzes the conversion of L-arabinose to L-ribulose. In Thermotoga sp. (strain RQ2), this protein is L-arabinose isomerase.